We begin with the raw amino-acid sequence, 359 residues long: Guanine nucleotide-binding protein G(q) subunit alpha (359 aa).

2 S-palmitoyl cysteine lipidation sites follow: Cys-9 and Cys-10. The 322-residue stretch at 38–359 (RELKLLLLGT…QLNLKEYNLV (322 aa)) folds into the G-alpha domain. The tract at residues 41–54 (KLLLLGTGESGKST) is G1 motif. Residues Ser-50, Gly-51, Lys-52, Ser-53, Thr-54, Ser-156, Leu-180, Arg-181, and Arg-183 each coordinate GTP. Ser-53 lines the Mg(2+) pocket. The G2 motif stretch occupies residues 178–186 (DVLRVRVPT). Thr-186 contacts Mg(2+). The segment at 201–210 (FRMVDVGGQR) is G3 motif. Gln-209 is modified (5-glutamyl histamine). Positions 270-277 (ILFLNKKD) are G4 motif. GTP is bound by residues Asn-274, Lys-275, Asp-277, and Ala-331. The interval 329 to 334 (TCATDT) is G5 motif.

The protein belongs to the G-alpha family. G(q) subfamily. G proteins are composed of 3 units; alpha, beta and gamma. The alpha chain contains the guanine nucleotide binding site. Interacts (GDP-bound form) with RIC8A (via C-terminus); promoting GNAQ folding and association with the plasma membrane. Binds NHERF1. Forms a complex with PECAM1 and BDKRB2. Interacts with GAS2L2. Palmitoylated by ZDHHC3 and ZDHHC7. Palmitoylation occurs in the Golgi and participates in the localization of GNAQ to the plasma membrane. In terms of processing, histaminylated at Gln-209 residues by TGM2.

Its subcellular location is the cell membrane. The protein resides in the golgi apparatus. It localises to the nucleus. It is found in the nucleus membrane. The catalysed reaction is GTP + H2O = GDP + phosphate + H(+). In terms of biological role, guanine nucleotide-binding proteins (G proteins) function as transducers downstream of G protein-coupled receptors (GPCRs) in numerous signaling cascades. The alpha chain contains the guanine nucleotide binding site and alternates between an active, GTP-bound state and an inactive, GDP-bound state. Signaling by an activated GPCR promotes GDP release and GTP binding. The alpha subunit has a low GTPase activity that converts bound GTP to GDP, thereby terminating the signal. Both GDP release and GTP hydrolysis are modulated by numerous regulatory proteins. Signaling is mediated via phospholipase C-beta-dependent inositol lipid hydrolysis for signal propagation: activates phospholipase C-beta: following GPCR activation, GNAQ activates PLC-beta (PLCB1, PLCB2, PLCB3 or PLCB4), leading to production of diacylglycerol (DAG) and inositol 1,4,5-trisphosphate (IP3). Required for platelet activation. Regulates B-cell selection and survival and is required to prevent B-cell-dependent autoimmunity. Regulates chemotaxis of BM-derived neutrophils and dendritic cells (in vitro). Transduces FFAR4 signaling in response to long-chain fatty acids (LCFAs). Together with GNA11, required for heart development. In Mus musculus (Mouse), this protein is Guanine nucleotide-binding protein G(q) subunit alpha (Gnaq).